The primary structure comprises 1907 residues: Receptor-type tyrosine-protein phosphatase F (1907 aa).

A signal peptide spans 1 to 29; the sequence is MAPEPAPGRTMVPLVPALVMLGLVAGAHG. Residues 30 to 1263 lie on the Extracellular side of the membrane; it reads DSKPVFIKVP…QQQEEPEMLW (1234 aa). 3 consecutive Ig-like C2-type domains span residues 33 to 123, 135 to 224, and 232 to 314; these read PVFI…AKLS, PSID…ANLY, and PRFS…AQVT. A disulfide bridge connects residues C54 and C107. 68–77 contributes to the heparin binding site; that stretch reads KKGKKVSSQR. N117 is a glycosylation site (N-linked (GlcNAc...) asparagine). C156 and C207 form a disulfide bridge. N-linked (GlcNAc...) asparagine glycosylation is found at N250 and N295. C253 and C298 are joined by a disulfide. 8 Fibronectin type-III domains span residues 321 to 411, 416 to 510, 514 to 604, 609 to 706, 711 to 819, 820 to 914, 918 to 1010, and 1014 to 1098; these read PPID…TGEQ, PPRR…TQQG, QPAD…TAQS, PPQK…TDED, PPRK…TTGA, VPGR…PEDL, FPQN…TMPV, and FAKN…TAPD. A disordered region spans residues 398 to 417; sequence GPPSEAVRARTGEQAPSSPP. The disordered stretch occupies residues 693–712; the sequence is GPESSPVLVRTDEDVPSGPP. N721 carries an N-linked (GlcNAc...) asparagine glycan. N-linked (GlcNAc...) asparagine glycosylation is present at N966. Residues 1264 to 1284 form a helical membrane-spanning segment; that stretch reads VTGPVLAVILIILIVIAILLF. The Cytoplasmic segment spans residues 1285 to 1907; sequence KRKRTHSPSS…YLGSFDHYAT (623 aa). Residue S1305 is modified to Phosphoserine. Tyrosine-protein phosphatase domains are found at residues 1352–1607 and 1639–1898; these read FSQE…LLEA and MELE…ALEY. Substrate-binding positions include D1516, 1548-1554, and Q1592; that span reads CSAGVGR. The active-site Phosphocysteine intermediate is C1548. Catalysis depends on C1839, which acts as the Phosphocysteine intermediate.

Belongs to the protein-tyrosine phosphatase family. Receptor class 2A subfamily. As to quaternary structure, interacts with GRIP1. Interacts with PPFIA1, PPFIA2 and PPFIA3. Interacts with INSR.

The protein resides in the membrane. It carries out the reaction O-phospho-L-tyrosyl-[protein] + H2O = L-tyrosyl-[protein] + phosphate. Its function is as follows. Possible cell adhesion receptor. It possesses an intrinsic protein tyrosine phosphatase activity (PTPase) and dephosphorylates EPHA2 regulating its activity. The first PTPase domain has enzymatic activity, while the second one seems to affect the substrate specificity of the first one. This Homo sapiens (Human) protein is Receptor-type tyrosine-protein phosphatase F (PTPRF).